The following is a 388-amino-acid chain: Succinyl-diaminopimelate desuccinylase (388 aa).

His-71 contacts Zn(2+). Asp-73 is an active-site residue. Residue Asp-104 coordinates Zn(2+). The Proton acceptor role is filled by Glu-143. Residues Glu-144, Glu-172, and His-361 each contribute to the Zn(2+) site.

It belongs to the peptidase M20A family. DapE subfamily. In terms of assembly, homodimer. It depends on Zn(2+) as a cofactor. Co(2+) is required as a cofactor.

The enzyme catalyses N-succinyl-(2S,6S)-2,6-diaminopimelate + H2O = (2S,6S)-2,6-diaminopimelate + succinate. The protein operates within amino-acid biosynthesis; L-lysine biosynthesis via DAP pathway; LL-2,6-diaminopimelate from (S)-tetrahydrodipicolinate (succinylase route): step 3/3. Catalyzes the hydrolysis of N-succinyl-L,L-diaminopimelic acid (SDAP), forming succinate and LL-2,6-diaminopimelate (DAP), an intermediate involved in the bacterial biosynthesis of lysine and meso-diaminopimelic acid, an essential component of bacterial cell walls. This Bradyrhizobium diazoefficiens (strain JCM 10833 / BCRC 13528 / IAM 13628 / NBRC 14792 / USDA 110) protein is Succinyl-diaminopimelate desuccinylase.